Consider the following 219-residue polypeptide: Elongation factor Ts (219 aa).

Residues 82-85 form an involved in Mg(2+) ion dislocation from EF-Tu region; that stretch reads TDFV.

The protein belongs to the EF-Ts family.

It is found in the cytoplasm. In terms of biological role, associates with the EF-Tu.GDP complex and induces the exchange of GDP to GTP. It remains bound to the aminoacyl-tRNA.EF-Tu.GTP complex up to the GTP hydrolysis stage on the ribosome. The chain is Elongation factor Ts from Trichodesmium erythraeum (strain IMS101).